The following is a 425-amino-acid chain: Formyl-CoA:oxalate CoA-transferase (425 aa).

CoA contacts are provided by residues 17 to 18 (QS), Arg-38, 72 to 75 (LDTK), 96 to 98 (NFG), Arg-104, and 136 to 139 (KVYE). The Nucleophile role is filled by Asp-168. 247–249 (GGQ) serves as a coordination point for substrate.

It belongs to the CoA-transferase III family. Frc subfamily. As to quaternary structure, homodimer.

It catalyses the reaction formyl-CoA + oxalate = oxalyl-CoA + formate. It participates in metabolic intermediate degradation; oxalate degradation; CO(2) and formate from oxalate: step 1/2. In terms of biological role, involved in the catabolism of oxalate and in the adapatation to low pH via the induction of the oxalate-dependent acid tolerance response (ATR). Catalyzes the transfer of the CoA moiety from formyl-CoA to oxalate. The polypeptide is Formyl-CoA:oxalate CoA-transferase (Bradyrhizobium diazoefficiens (strain JCM 10833 / BCRC 13528 / IAM 13628 / NBRC 14792 / USDA 110)).